A 670-amino-acid polypeptide reads, in one-letter code: DNA ligase (670 aa).

NAD(+) contacts are provided by residues D31–D35, S76–L77, and E108. K110 (N6-AMP-lysine intermediate) is an active-site residue. R131, E166, K271, and K295 together coordinate NAD(+). Residues C388, C391, C406, and C412 each coordinate Zn(2+). Positions N579–S668 constitute a BRCT domain.

The protein belongs to the NAD-dependent DNA ligase family. LigA subfamily. Mg(2+) serves as cofactor. The cofactor is Mn(2+).

The catalysed reaction is NAD(+) + (deoxyribonucleotide)n-3'-hydroxyl + 5'-phospho-(deoxyribonucleotide)m = (deoxyribonucleotide)n+m + AMP + beta-nicotinamide D-nucleotide.. Functionally, DNA ligase that catalyzes the formation of phosphodiester linkages between 5'-phosphoryl and 3'-hydroxyl groups in double-stranded DNA using NAD as a coenzyme and as the energy source for the reaction. It is essential for DNA replication and repair of damaged DNA. The polypeptide is DNA ligase (Neorickettsia sennetsu (strain ATCC VR-367 / Miyayama) (Ehrlichia sennetsu)).